Reading from the N-terminus, the 209-residue chain is Neurotrophin-4 (209 aa).

Residues 1-21 form the signal peptide; the sequence is MLPRHSCSLLLFLFLLPSVPM. Positions 22–79 are excised as a propeptide; it reads EPHPPSSTLPPFLAPEWDLLSPRVALSRGAPAGPPLLFLLEAGAYGEPAGAPANRSRR. An N-linked (GlcNAc...) asparagine glycan is attached at asparagine 75. Cystine bridges form between cysteine 96-cysteine 169, cysteine 140-cysteine 198, and cysteine 157-cysteine 200.

Belongs to the NGF-beta family.

It localises to the secreted. Functionally, target-derived survival factor for peripheral sensory sympathetic neurons. May promote ameloblast differentiation and subsequent reduction in proliferation of ameloblasts. This is Neurotrophin-4 (Ntf4) from Mus musculus (Mouse).